Here is a 499-residue protein sequence, read N- to C-terminus: Aspartyl/glutamyl-tRNA(Asn/Gln) amidotransferase subunit B (499 aa).

It belongs to the GatB/GatE family. GatB subfamily. Heterotrimer of A, B and C subunits.

It carries out the reaction L-glutamyl-tRNA(Gln) + L-glutamine + ATP + H2O = L-glutaminyl-tRNA(Gln) + L-glutamate + ADP + phosphate + H(+). The enzyme catalyses L-aspartyl-tRNA(Asn) + L-glutamine + ATP + H2O = L-asparaginyl-tRNA(Asn) + L-glutamate + ADP + phosphate + 2 H(+). In terms of biological role, allows the formation of correctly charged Asn-tRNA(Asn) or Gln-tRNA(Gln) through the transamidation of misacylated Asp-tRNA(Asn) or Glu-tRNA(Gln) in organisms which lack either or both of asparaginyl-tRNA or glutaminyl-tRNA synthetases. The reaction takes place in the presence of glutamine and ATP through an activated phospho-Asp-tRNA(Asn) or phospho-Glu-tRNA(Gln). This is Aspartyl/glutamyl-tRNA(Asn/Gln) amidotransferase subunit B from Leifsonia xyli subsp. xyli (strain CTCB07).